We begin with the raw amino-acid sequence, 518 residues long: 4-trimethylaminobutyraldehyde dehydrogenase B (518 aa).

NAD(+) contacts are provided by residues Lys-204 and 256–260; that span reads GSVPT. Glu-278 functions as the Proton acceptor in the catalytic mechanism. The active-site Nucleophile is Cys-312. Glu-415 contributes to the NAD(+) binding site.

This sequence belongs to the aldehyde dehydrogenase family. Homotetramer.

It localises to the cytoplasm. Its subcellular location is the cytosol. The enzyme catalyses 4-(trimethylamino)butanal + NAD(+) + H2O = 4-(trimethylamino)butanoate + NADH + 2 H(+). The catalysed reaction is an aldehyde + NAD(+) + H2O = a carboxylate + NADH + 2 H(+). It functions in the pathway amine and polyamine biosynthesis; carnitine biosynthesis. Its function is as follows. Converts gamma-trimethylaminobutyraldehyde into gamma-butyrobetaine with high efficiency (in vitro). Can catalyze the irreversible oxidation of a broad range of aldehydes to the corresponding acids in an NAD-dependent reaction, but with low efficiency. The chain is 4-trimethylaminobutyraldehyde dehydrogenase B (aldh9a1b) from Danio rerio (Zebrafish).